We begin with the raw amino-acid sequence, 628 residues long: Hepatocyte nuclear factor 1-alpha (628 aa).

The tract at residues 1 to 31 is dimerization; it reads MVSKLSQLQTELLAALLESGLSKEALIQALG. The HNF-p1 domain occupies 1 to 32; it reads MVSKLSQLQTELLAALLESGLSKEALIQALGE. Residues 47–79 form a disordered region; it reads GESCGGTRGDLTELPNGLGETRGSEDDTDDDGE. At serine 70 the chain carries Phosphoserine. Threonine 74 carries the phosphothreonine modification. The 96-residue stretch at 87–182 folds into the POU-specific atypical domain; sequence KELENLSPEE…VAQQFTHAGQ (96 aa). Serine 93 is subject to Phosphoserine. Lysine 117 participates in a covalent cross-link: Glycyl lysine isopeptide (Lys-Gly) (interchain with G-Cter in ubiquitin). Interaction with DNA stretches follow at residues 130 to 132, 143 to 149, 155 to 158, and 203 to 206; these read QRE, HLSQHLN, KTQK, and RFKW. A disordered region spans residues 183–205; that stretch reads GGLIEEPTGDELPTKKGRRNRFK. The Nuclear localization signal signature appears at 197 to 205; it reads KKGRRNRFK. The homeobox; HNF1-type DNA-binding region spans 199-279; the sequence is GRRNRFKWGP…NRRKEEAFRH (81 aa). Serine 247 bears the Phosphoserine mark. 2 interaction with DNA regions span residues 263–265 and 270–273; these read RVY and NRRK. Disordered stretches follow at residues 284 to 338 and 541 to 585; these read DTYN…SSSG and FTSD…LSTS. Positions 288-298 are enriched in pro residues; the sequence is GPPPGPGPGPA. A Phosphoserine modification is found at serine 313. Polar residues-rich tracts occupy residues 324–338 and 558–575; these read QSAT…SSSG and SPAT…NIQH.

It belongs to the HNF1 homeobox family. As to quaternary structure, binds DNA as a dimer. Heterotetramer with PCBD1; formed by a dimer of dimers. Interacts with PCBD1. Interacts with BHLHE41. Interacts with NR5A2. Interacts with SPOP; this interaction promotes ubiquitination and degradation of HNF1A. Ubiquitinated in s SPOP-dependent manner; leading to prteasomal degradation. As to expression, liver.

It is found in the nucleus. Transcriptional activator that regulates the tissue specific expression of multiple genes, especially in pancreatic islet cells and in liver. Binds to the inverted palindrome 5'-GTTAATNATTAAC-3'. Activates the transcription of CYP1A2, CYP2E1 and CYP3A11. This chain is Hepatocyte nuclear factor 1-alpha (Hnf1a), found in Rattus norvegicus (Rat).